The following is a 466-amino-acid chain: MTQPASVRWQLWIVAFGFFMQTLDTTIVNTALPSMAASLNESPLHMHSVIVSYVLTVAVMLPASGWLADRIGVKNIFFAAILLFTLGSLLCARSETLDELLISRVIQGIGGAMMVPVGRLTVMKIVPRDQYMAAMTFVTLPGQIGPLLGPALGGFLVEYASWHWIFLINLPVGIIGALATWFLMPNYTMQTQRFDISGFVWLAVGMATLTLALDGNRSLGIPPIAIFALIAIGLIALLSYWLHARRNERALFNLRLFDTHTFSIGLTGGLLARIGSGMLPFMTPLFLQLGMGFSPFHAGLMMVPMVLGSMGIKRVVVQIVNRFGYRRVLVASTLLLALVTALFALVALMQWIWMIPVVLFFLGTVNAIRFSTMNTLTLKDLPDPLASGGNSLLSMTMQLSTSLGVSIAGILLGIFSQPHIAAESGATHTVFLYTYLSMVVIIALPALIFNRVPPDTLKQSTLARKS.

A run of 14 helical transmembrane segments spans residues 11-31 (LWIV…VNTA), 48-68 (SVIV…GWLA), 71-91 (IGVK…SLLC), 105-125 (VIQG…VMKI), 137-157 (FVTL…GFLV), 164-184 (WIFL…WFLM), 194-214 (FDIS…LALD), 218-238 (SLGI…IALL), 262-282 (FSIG…LPFM), 292-312 (GFSP…SMGI), 328-347 (VLVA…ALVA), 351-370 (WIWM…AIRF), 402-422 (SLGV…HIAA), and 429-449 (TVFL…ALIF).

The protein belongs to the major facilitator superfamily. TCR/Tet family.

The protein resides in the cell inner membrane. This is Putative multidrug resistance protein MdtD from Pectobacterium atrosepticum (strain SCRI 1043 / ATCC BAA-672) (Erwinia carotovora subsp. atroseptica).